Consider the following 446-residue polypeptide: Tubulin beta-4 chain (446 aa).

GTP contacts are provided by Gln-11, Glu-69, Ser-138, Gly-142, Thr-143, Gly-144, Asn-204, and Asn-226. Position 69 (Glu-69) interacts with Mg(2+). Residues 417–426 (DLVSEYQQYQ) show a composition bias toward polar residues. The segment at 417-446 (DLVSEYQQYQDATADEEGDYEDEDEALHDE) is disordered. Positions 429–446 (TADEEGDYEDEDEALHDE) are enriched in acidic residues.

The protein belongs to the tubulin family. In terms of assembly, dimer of alpha and beta chains. A typical microtubule is a hollow water-filled tube with an outer diameter of 25 nm and an inner diameter of 15 nM. Alpha-beta heterodimers associate head-to-tail to form protofilaments running lengthwise along the microtubule wall with the beta-tubulin subunit facing the microtubule plus end conferring a structural polarity. Microtubules usually have 13 protofilaments but different protofilament numbers can be found in some organisms and specialized cells. The cofactor is Mg(2+).

The protein resides in the cytoplasm. It localises to the cytoskeleton. Tubulin is the major constituent of microtubules, a cylinder consisting of laterally associated linear protofilaments composed of alpha- and beta-tubulin heterodimers. Microtubules grow by the addition of GTP-tubulin dimers to the microtubule end, where a stabilizing cap forms. Below the cap, tubulin dimers are in GDP-bound state, owing to GTPase activity of alpha-tubulin. In Eleusine indica (Goosegrass), this protein is Tubulin beta-4 chain (TUBB4).